Reading from the N-terminus, the 189-residue chain is Orcokinin peptides (189 aa).

Residues 1–21 form the signal peptide; the sequence is MRGAGGALAVAVAALLVCCSA. Propeptides lie at residues 22 to 124 and 145 to 174; these read DPHQ…TFVK and FYHLSSFDKKRYRADYPMDEIDLSHFPIGS.

This sequence belongs to the orcokinin family. As to expression, orcokinin-like peptide: Expressed in corpora cardiaca (CC), corpora allata (CA), antennal lobe (AL) and gnathal ganglion (GNG) (at protein level). Expression in CC, CA and GNG detected in some animals, in AL in few animals (at protein level). Orcokinin-like peptide precursor-related peptide: Expressed in corpora cardiaca (CC), corpora allata (CA), antennal lobe (AL) and gnathal ganglion (GNG) (at protein level). Expression in GNG detected in most animals, expression in CC, CA and AL detected in some animals (at protein level).

It localises to the secreted. Myotropic peptides. The chain is Orcokinin peptides from Agrotis ipsilon (Black cutworm moth).